A 672-amino-acid polypeptide reads, in one-letter code: Threonine--tRNA ligase (672 aa).

Residues 2 to 60 form the TGS domain; sequence SEPKNILLTVDGELREVTHGTTGLDLFREKPTTAVMRVDGLLWDLAREIPAGASVESVD. Residues 260 to 567 are catalytic; that stretch reads DHRKLGAELD…LTEHYAGAFP (308 aa). Zn(2+)-binding residues include Cys-366, His-417, and His-544.

This sequence belongs to the class-II aminoacyl-tRNA synthetase family. As to quaternary structure, homodimer. Zn(2+) serves as cofactor.

It is found in the cytoplasm. The catalysed reaction is tRNA(Thr) + L-threonine + ATP = L-threonyl-tRNA(Thr) + AMP + diphosphate + H(+). Catalyzes the attachment of threonine to tRNA(Thr) in a two-step reaction: L-threonine is first activated by ATP to form Thr-AMP and then transferred to the acceptor end of tRNA(Thr). Also edits incorrectly charged L-seryl-tRNA(Thr). In Micrococcus luteus (strain ATCC 4698 / DSM 20030 / JCM 1464 / CCM 169 / CCUG 5858 / IAM 1056 / NBRC 3333 / NCIMB 9278 / NCTC 2665 / VKM Ac-2230) (Micrococcus lysodeikticus), this protein is Threonine--tRNA ligase.